A 484-amino-acid chain; its full sequence is Palmitoyltransferase ZDHHC1 (484 aa).

Composition is skewed to polar residues over residues 1-11 and 19-34; these read MNICNKPSNKT and TAPS…LQGQ. Residues 1–38 form a disordered region; sequence MNICNKPSNKTAPEKSVWTAPSQDSGPSPELQGQRSRR. Residues 1–49 lie on the Cytoplasmic side of the membrane; that stretch reads MNICNKPSNKTAPEKSVWTAPSQDSGPSPELQGQRSRRNGWSWPPHPLQ. The mediates interaction with STING1 stretch occupies residues 1-268; sequence MNICNKPSNK…GHLLCFHIYL (268 aa). The chain crosses the membrane as a helical span at residues 50 to 70; that stretch reads IVAWLLYLFFAVIGFGVLVPL. Residues 71–74 are Lumenal-facing; sequence LPHH. The helical transmembrane segment at 75 to 95 threads the bilayer; the sequence is WVPAGYACMGAIFAGHLVVHL. Over 96–182 the chain is Cytoplasmic; the sequence is TAVSIDPADA…YRLFLHSVAS (87 aa). One can recognise a DHHC domain in the interval 131 to 181; the sequence is LHCNLCDVDVSARSKHCSACNKCVCGFDHHCKWLNNCVGERNYRLFLHSVA. Cys-161 (S-palmitoyl cysteine intermediate) is an active-site residue. A helical transmembrane segment spans residues 183-203; that stretch reads ALLGVLLLVLVATYVFVEFFV. Over 204 to 238 the chain is Lumenal; it reads NPMRLRTNQHFEVLKNHTDVWFVFLPAAPVETQAP. Residues 239–259 form a helical membrane-spanning segment; that stretch reads AILALAALLILLGLLSTALLG. At 260 to 484 the chain is on the cytoplasmic side; the sequence is HLLCFHIYLM…GTPGGGDGLP (225 aa). 2 disordered regions span residues 341-415 and 444-484; these read TQGQ…VHAG and LGAP…DGLP. A compositionally biased stretch (basic residues) spans 364–374; it reads PQKKRKRRVYR. The span at 380–392 shows a compositional bias: basic and acidic residues; it reads VLDRELPLPRLRE. Positions 395-415 are enriched in low complexity; sequence TPSRRSSSSSDSTSASPVHAG. Residues 475-484 show a composition bias toward gly residues; the sequence is GTPGGGDGLP.

Belongs to the DHHC palmitoyltransferase family. As to quaternary structure, interacts with STING1; ZDHHC1 constitutively interacts with STING1 and in presence of DNA viruses activates it by promoting its cGAMP-induced oligomerization and the recruitment of downstream signaling components. As to expression, expressed at high levels in fetal lung and heart. Expressed at lower levels in fetal liver and brain. Also detected in adult islet cells of pancreas, Leydig cells of testis, retina and molecular layer of cerebellum.

The protein localises to the endosome membrane. The protein resides in the endoplasmic reticulum membrane. Its subcellular location is the golgi apparatus. The catalysed reaction is L-cysteinyl-[protein] + hexadecanoyl-CoA = S-hexadecanoyl-L-cysteinyl-[protein] + CoA. Functionally, palmitoyltransferase that catalyzes the addition of palmitate onto various protein substrates, such as NCDN and NLRP3. Has a palmitoyltransferase activity toward NCDN and regulates NCDN association with endosome membranes through this palmitoylation. Acts as an activator of the NLRP3 inflammasome by mediating palmitoylation of 'Cys-130' and 'Cys-958' of NLRP3, thereby promoting NLRP3 phosphorylation and activation by NEK7. Its function is as follows. Also has a palmitoyltransferase activity-independent function in DNA virus-triggered and CGAS-mediated innate immune response. Functions as an activator of STING1 by promoting its cGAMP-induced oligomerization and the recruitment of downstream signaling components. The protein is Palmitoyltransferase ZDHHC1 of Mus musculus (Mouse).